Here is a 61-residue protein sequence, read N- to C-terminus: Ubiquinol-cytochrome c reductase complex assembly factor 6 (61 aa).

Residues 1–9 (MPAGVSWGQ) are Mitochondrial matrix-facing. The helical transmembrane segment at 10 to 32 (YLKFLGCALASMMAGSQAVHLYY) threads the bilayer. At 33 to 61 (KPLEDLRVYIEQEQHSTQVDPTAKPPESA) the chain is on the mitochondrial intermembrane side.

Belongs to the UQCC6 family. As to quaternary structure, interacts with sloth1; the interaction stabilizes both components. As to expression, expressed in the brain.

Its subcellular location is the mitochondrion inner membrane. It localises to the mitochondrion. Required for the assembly and stability of the mitochondrial ubiquinol-cytochrome c reductase complex (complex III (CIII) or cytochrome b-c1 complex), a multisubunit transmembrane complex that is part of the mitochondrial electron transport chain (ETC) which drives oxidative phosphorylation. In Drosophila melanogaster (Fruit fly), this protein is Ubiquinol-cytochrome c reductase complex assembly factor 6.